Consider the following 478-residue polypeptide: Major facilitator superfamily domain-containing protein 12 (478 aa).

At M1 the chain carries N-acetylmethionine. Topologically, residues 1-26 are cytoplasmic; sequence MVPGSPAAGAGPAPRALSLAARLSYA. Residues 27–47 form a helical membrane-spanning segment; sequence VGHFLNDLCASMWFTYLLLYL. The Lumenal portion of the chain corresponds to 48–56; sequence HSVRAYSSR. Residues 57 to 77 traverse the membrane as a helical segment; the sequence is GAGLLLLLGQVADGLCTPLVG. At 78 to 97 the chain is on the cytoplasmic side; the sequence is YEADRAAGRCARCGPRKAWH. Residues 98-118 form a helical membrane-spanning segment; that stretch reads LVGTVCVLLSFPFIFSPCLGC. Residues 119–124 are Lumenal-facing; that stretch reads GAATPE. Residues 125–145 form a helical membrane-spanning segment; that stretch reads WAALLYYGPFIVVFQFGWAAT. The Cytoplasmic segment spans residues 146–168; sequence QIAHLSLIPELVTSDHEKVELTA. Residues 169–189 traverse the membrane as a helical segment; the sequence is LRYAFTVVANITVFGAAWLLL. At 190–216 the chain is on the lumenal side; the sequence is RLQGSAREGPPDEAGDHLGVQDVPVFR. Residues 217 to 237 traverse the membrane as a helical segment; it reads TLSLCVVGVGAVFSLLFHLGT. Residues 238-277 lie on the Cytoplasmic side of the membrane; that stretch reads RERRRPPAQEPDERSPLLAPATARPLLLWKHWLREPSFYQ. Residues 278 to 300 form a helical membrane-spanning segment; the sequence is VGLLYMSTRLIVNLSQTYIAMYL. At 301–308 the chain is on the lumenal side; it reads TYSLNLPK. The chain crosses the membrane as a helical span at residues 309 to 329; sequence KFIATIPLVMYVSGFCSSFLM. The Cytoplasmic portion of the chain corresponds to 330–338; that stretch reads KPVNKCIGR. Residues 339-359 traverse the membrane as a helical segment; the sequence is NMTYFVGLLVILAFAAWVVLV. The Lumenal segment spans residues 360 to 361; that stretch reads DE. The helical transmembrane segment at 362–382 threads the bilayer; that stretch reads LGMAVYVAAVLLGGGCATILV. The Cytoplasmic segment spans residues 383 to 400; sequence TSLAMTADLIGPHTHSGA. A helical transmembrane segment spans residues 401–421; that stretch reads FVYGAMSFSDKVANGLAVMVI. The Lumenal segment spans residues 422–436; that stretch reads QSLHPCSLELCCRAC. The helical transmembrane segment at 437 to 457 threads the bilayer; it reads VGFYHWVMVAVTGGVGVAATL. The Cytoplasmic segment spans residues 458–478; that stretch reads SLCSLLVWPIRLRSWDPGAQP.

Belongs to the major facilitator superfamily.

The protein resides in the melanosome membrane. The protein localises to the lysosome membrane. It catalyses the reaction L-cysteine(in) = L-cysteine(out). Transporter that mediates the import of cysteine into melanosomes, thereby regulating skin/hair pigmentation. In melanosomes, cysteine import is required both for normal levels of cystine, the oxidized dimer of cysteine, and provide cysteine for the production of the cysteinyldopas used in pheomelanin synthesis, thereby regulating skin/hair pigmentation. Also catalyzes import of cysteine into lysosomes in non-pigmented cells, regulating lysosomal cystine and cysteine storage, which is essnetial for redox homeostasis. In Equus caballus (Horse), this protein is Major facilitator superfamily domain-containing protein 12.